The following is a 122-amino-acid chain: Large ribosomal subunit protein uL14 (122 aa).

Belongs to the universal ribosomal protein uL14 family. Part of the 50S ribosomal subunit. Forms a cluster with proteins L3 and L19. In the 70S ribosome, L14 and L19 interact and together make contacts with the 16S rRNA in bridges B5 and B8.

Binds to 23S rRNA. Forms part of two intersubunit bridges in the 70S ribosome. The chain is Large ribosomal subunit protein uL14 from Chromobacterium violaceum (strain ATCC 12472 / DSM 30191 / JCM 1249 / CCUG 213 / NBRC 12614 / NCIMB 9131 / NCTC 9757 / MK).